The primary structure comprises 418 residues: Putative ion-transport protein YfeO (418 aa).

10 consecutive transmembrane segments (helical) span residues 15 to 37 (PAVA…ASVL), 57 to 79 (LWII…FSQG), 99 to 118 (ALPR…VSLG), 149 to 171 (ILAS…LIFS), 186 to 208 (LFAP…HPHF), 221 to 243 (TDIL…AVWC), 258 to 280 (VLVL…PVSL), 301 to 323 (YFLL…FRGG), 343 to 363 (VPAV…VLVV), and 376 to 398 (VVVP…WLLL).

It belongs to the chloride channel (TC 2.A.49) family.

Its subcellular location is the cell membrane. The protein is Putative ion-transport protein YfeO (yfeO) of Shigella flexneri.